The primary structure comprises 280 residues: Tumor necrosis factor ligand superfamily member 6 (280 aa).

At 1-80 (MQQPFNYPYP…KKRGNHSTGL (80 aa)) the chain is on the cytoplasmic side. The tract at residues 20 to 70 (SSPWAPPGTVLPCPTSVPRRPGQRRPPPPPPPPPLPPPPPSPLPPLPLPPL) is disordered. The segment covering 43–69 (RRPPPPPPPPPLPPPPPSPLPPLPLPP) has biased composition (pro residues). Residues 81–101 (CLLVMFFMVLVALVGLGLGMF) traverse the membrane as a helical; Signal-anchor for type II membrane protein segment. The Extracellular segment spans residues 102–280 (QLFHLQKELA…SQTFFGLYKL (179 aa)). The segment at 117-155 (TSQKHTASSLEKQIGHPSPPPEKKEQRKVAHLTGKPNSR) is disordered. One can recognise a THD domain in the interval 144–280 (KVAHLTGKPN…SQTFFGLYKL (137 aa)). N183 carries N-linked (GlcNAc...) asparagine glycosylation. C201 and C232 are joined by a disulfide. 2 N-linked (GlcNAc...) asparagine glycosylation sites follow: N249 and N259.

This sequence belongs to the tumor necrosis factor family. In terms of assembly, homotrimer. Interacts with ARHGAP9, BAIAP2L1, BTK, CACNB3, CACNB4, CRK, DLG2, DNMBP, DOCK4, EPS8L3, FGR, FYB1, FYN, HCK, ITK, ITSN2, KALRN, LYN, MACC1, MIA, MPP4, MYO15A, NCF1, NCK1, NCK2, NCKIPSD, OSTF1, PIK3R1, PSTPIP1, RIMBP3C, SAMSN1, SH3GL3, SH3PXD2B, SH3PXD2A, SH3RF2, SKAP2, SNX33, SNX9, SORBS3, SPTA1, SRC, SRGAP1, SRGAP2, SRGAP3, TEC, TJP3 and YES1. The soluble form derives from the membrane form by proteolytic processing. The membrane-bound form undergoes two successive intramembrane proteolytic cleavages. The first one is processed by ADAM10 producing an N-terminal fragment, which lacks the receptor-binding extracellular domain. This ADAM10-processed FasL (FasL APL) remnant form is still membrane anchored and further processed by SPPL2A that liberates the FasL intracellular domain (FasL ICD). FasL shedding by ADAM10 is a prerequisite for subsequent intramembrane cleavage by SPPL2A in T-cells. In terms of processing, phosphorylated by FGR on tyrosine residues; this is required for ubiquitination and subsequent internalization. Post-translationally, N-glycosylated. Glycosylation enhances apoptotic activity. Monoubiquitinated.

Its subcellular location is the cell membrane. It is found in the cytoplasmic vesicle lumen. The protein localises to the lysosome lumen. The protein resides in the secreted. It localises to the nucleus. Its function is as follows. Cytokine that binds to TNFRSF6/FAS, a receptor that transduces the apoptotic signal into cells. Involved in cytotoxic T-cell-mediated apoptosis, natural killer cell-mediated apoptosis and in T-cell development. Initiates fratricidal/suicidal activation-induced cell death (AICD) in antigen-activated T-cells contributing to the termination of immune responses. TNFRSF6/FAS-mediated apoptosis has also a role in the induction of peripheral tolerance. Binds to TNFRSF6B/DcR3, a decoy receptor that blocks apoptosis. In terms of biological role, induces FAS-mediated activation of NF-kappa-B, initiating non-apoptotic signaling pathways. Can induce apoptosis but does not appear to be essential for this process. Cytoplasmic form induces gene transcription inhibition. The polypeptide is Tumor necrosis factor ligand superfamily member 6 (FASLG) (Macaca fascicularis (Crab-eating macaque)).